We begin with the raw amino-acid sequence, 429 residues long: MDRIHITGGTPLNGTIPISGAKNAALPLMIASLLTGETLELINVPRLADIAALTRILGNHGVDHMVVGKRPGQTAETGQTVRLTASNVIDTTAPYELVSTMRASFWVIAPLLARFGEAKVSLPGGCAIGTRPVDLLIMALEKLGAEIEIDGGYVVAKTKNGLRGAEITFPTVTVGGTHVALMAAALAYGTTVIDNAAREPEVVDLAECLSKMGARIEGAGTSRIVVEGVARLGGARHEVLPDRIETGTYAMAVAMTGGDVSLVNTRTELLASALDVLASTGTEITALPDGIRVRRNGGGISPADVTTDPFPGFPTDLQAQFMALMTLAKGQSRIRETIFENRFMHVQELARLGARIRLDGDLAVVEGVERLKGAPVMATDLRASVSLVIGALAAEGETQINRVYHLDRGFEALEAKLGRCGARIERVRA.

Position 22–23 (Lys-22–Asn-23) interacts with phosphoenolpyruvate. Residue Arg-102 coordinates UDP-N-acetyl-alpha-D-glucosamine. Catalysis depends on Cys-126, which acts as the Proton donor. Cys-126 is modified (2-(S-cysteinyl)pyruvic acid O-phosphothioketal). UDP-N-acetyl-alpha-D-glucosamine is bound by residues Arg-131 to Leu-135, Asp-316, and Ile-338.

This sequence belongs to the EPSP synthase family. MurA subfamily.

Its subcellular location is the cytoplasm. It catalyses the reaction phosphoenolpyruvate + UDP-N-acetyl-alpha-D-glucosamine = UDP-N-acetyl-3-O-(1-carboxyvinyl)-alpha-D-glucosamine + phosphate. Its pathway is cell wall biogenesis; peptidoglycan biosynthesis. Its function is as follows. Cell wall formation. Adds enolpyruvyl to UDP-N-acetylglucosamine. This is UDP-N-acetylglucosamine 1-carboxyvinyltransferase from Methylorubrum populi (strain ATCC BAA-705 / NCIMB 13946 / BJ001) (Methylobacterium populi).